The chain runs to 118 residues: Large ribosomal subunit protein uL22 (118 aa).

It belongs to the universal ribosomal protein uL22 family. Part of the 50S ribosomal subunit.

This protein binds specifically to 23S rRNA; its binding is stimulated by other ribosomal proteins, e.g. L4, L17, and L20. It is important during the early stages of 50S assembly. It makes multiple contacts with different domains of the 23S rRNA in the assembled 50S subunit and ribosome. Functionally, the globular domain of the protein is located near the polypeptide exit tunnel on the outside of the subunit, while an extended beta-hairpin is found that lines the wall of the exit tunnel in the center of the 70S ribosome. This chain is Large ribosomal subunit protein uL22, found in Pediococcus pentosaceus (strain ATCC 25745 / CCUG 21536 / LMG 10740 / 183-1w).